The primary structure comprises 688 residues: DNA-directed RNA polymerase subunit beta' (688 aa).

Zn(2+) is bound by residues Cys-69, Cys-71, Cys-87, and Cys-90. Asp-497, Asp-499, and Asp-501 together coordinate Mg(2+).

The protein belongs to the RNA polymerase beta' chain family. RpoC1 subfamily. In terms of assembly, in plastids the minimal PEP RNA polymerase catalytic core is composed of four subunits: alpha, beta, beta', and beta''. When a (nuclear-encoded) sigma factor is associated with the core the holoenzyme is formed, which can initiate transcription. Mg(2+) is required as a cofactor. It depends on Zn(2+) as a cofactor.

Its subcellular location is the plastid. It localises to the chloroplast. It carries out the reaction RNA(n) + a ribonucleoside 5'-triphosphate = RNA(n+1) + diphosphate. Functionally, DNA-dependent RNA polymerase catalyzes the transcription of DNA into RNA using the four ribonucleoside triphosphates as substrates. This Sinapis alba (White mustard) protein is DNA-directed RNA polymerase subunit beta'.